The primary structure comprises 98 residues: NADH-ubiquinone oxidoreductase chain 4L (98 aa).

Helical transmembrane passes span 1–21, 29–49, and 58–78; these read MPII…GMLF, SLLC…LMAL, and IVPI…LALL.

The protein belongs to the complex I subunit 4L family. In terms of assembly, core subunit of respiratory chain NADH dehydrogenase (Complex I) which is composed of 45 different subunits.

It is found in the mitochondrion inner membrane. The enzyme catalyses a ubiquinone + NADH + 5 H(+)(in) = a ubiquinol + NAD(+) + 4 H(+)(out). Core subunit of the mitochondrial membrane respiratory chain NADH dehydrogenase (Complex I) which catalyzes electron transfer from NADH through the respiratory chain, using ubiquinone as an electron acceptor. Part of the enzyme membrane arm which is embedded in the lipid bilayer and involved in proton translocation. In Trachypithecus obscurus (Dusky leaf-monkey), this protein is NADH-ubiquinone oxidoreductase chain 4L (MT-ND4L).